Consider the following 569-residue polypeptide: MITIAESHPQIHHSPPDTTAPSTPPTATIFRSRLPDIVLSNHLPLHEYLFENTLTSPSPCIISASTGRSYSFAETHLLSRKTASFLSSRCGVRRGGVVMLLLHNCPEFVFSFLGSSMLGAVTTAANPFCTPQEIKKQLLASGATVIITQSAYASKISRDDDVEDLIVVTVSDNELERHAAPPEGCVSFSEVESADEDAVPDAVGVGPEDAVAMPFSSGTTGLPKGVVLTHKSMTSSVGQIVDGENPNLHLRKGEDVLLCVLPLFHIFSLNSVLLCGLRTGAAVVIMARFEMEGMLETIQRWGVSVAAVVPPLVLALAKNPLVEKYDMGTVRMVLSGAAPLGKELEAVLKGRLPQAVLGQGYGMTEAGPVISMSPGFAKQPTPVKSGSCGTVVRNAELKVMDPETGFSLGRNQPGEICVRGPQIMKGYLNDPEATSATIDVEGWLHTGDVGYVDDDDEVFIVDRVKELIKFKGFQVPPAELEALLLGHPSIADAAVIPQNDEVAGEVPVAFVVPSKSSDLTEEIVKEFISKQVVFYKRIHRVYFIHAIPKSPSGKILRKDLRAKVASFSS.

A disordered region spans residues 1-24 (MITIAESHPQIHHSPPDTTAPSTP). ATP-binding positions include 216–220 (SSGTT), His-265, 337–339 (AAP), 359–360 (QG), Thr-364, Asp-448, Arg-463, and Lys-554. Residues 290–359 (EMEGMLETIQ…GRLPQAVLGQ (70 aa)) are SBD1. The segment at 360 to 427 (GYGMTEAGPV…VRGPQIMKGY (68 aa)) is SBD2.

It belongs to the ATP-dependent AMP-binding enzyme family. In terms of tissue distribution, mostly expressed in stems, and, to a lower extent, in bulbs.

The enzyme catalyses (E)-4-coumarate + ATP + CoA = (E)-4-coumaroyl-CoA + AMP + diphosphate. It functions in the pathway phytoalexin biosynthesis; 3,4',5-trihydroxystilbene biosynthesis; 3,4',5-trihydroxystilbene from trans-4-coumarate: step 1/2. In terms of biological role, produces CoA thioesters of a variety of hydroxy- and methoxy-substituted cinnamic acids, which are used to synthesize several phenylpropanoid-derived compounds, including anthocyanins, flavonoids, isoflavonoids, coumarins, lignin, suberin and wall-bound phenolics. The polypeptide is 4-coumarate-CoA ligase 2 (Narcissus pseudonarcissus (Daffodil)).